The following is a 50-amino-acid chain: Small ribosomal subunit protein uS14 (50 aa).

Zn(2+)-binding residues include cysteine 15, cysteine 18, cysteine 33, and cysteine 36.

Belongs to the universal ribosomal protein uS14 family. Zinc-binding uS14 subfamily. As to quaternary structure, part of the 30S ribosomal subunit. Zn(2+) is required as a cofactor.

In terms of biological role, binds 16S rRNA, required for the assembly of 30S particles. In Methanosarcina barkeri (strain Fusaro / DSM 804), this protein is Small ribosomal subunit protein uS14.